We begin with the raw amino-acid sequence, 126 residues long: Urease subunit beta (126 aa).

This sequence belongs to the urease beta subunit family. Heterotrimer of UreA (gamma), UreB (beta) and UreC (alpha) subunits. Three heterotrimers associate to form the active enzyme.

The protein localises to the cytoplasm. The catalysed reaction is urea + 2 H2O + H(+) = hydrogencarbonate + 2 NH4(+). The protein operates within nitrogen metabolism; urea degradation; CO(2) and NH(3) from urea (urease route): step 1/1. This is Urease subunit beta from Sporosarcina pasteurii (Bacillus pasteurii).